The primary structure comprises 549 residues: Glucose-6-phosphate isomerase (549 aa).

N6-acetyllysine occurs at positions 80, 228, and 234. E355 serves as the catalytic Proton donor. Residues H386 and K514 contribute to the active site.

It belongs to the GPI family.

The protein resides in the cytoplasm. It carries out the reaction alpha-D-glucose 6-phosphate = beta-D-fructose 6-phosphate. It functions in the pathway carbohydrate biosynthesis; gluconeogenesis. It participates in carbohydrate degradation; glycolysis; D-glyceraldehyde 3-phosphate and glycerone phosphate from D-glucose: step 2/4. Functionally, catalyzes the reversible isomerization of glucose-6-phosphate to fructose-6-phosphate. This chain is Glucose-6-phosphate isomerase, found in Shigella flexneri serotype 5b (strain 8401).